The chain runs to 163 residues: MFNKLMEVLMSFNLPRIRNKSELQHHTNKQSYVDDVFNNFFNEIASFSYPTHYNNKILSPRTDITENESEYHLEVELPGVTQDNIDLKIDSNILTIDGKKEQSTEKKDHNYHMKERYYGSFSRSISLPSNVDEEHVTANFKDGILSIKIPKKEQSKAKKIKIS.

Positions 53–163 constitute a sHSP domain; that stretch reads YNNKILSPRT…QSKAKKIKIS (111 aa).

It belongs to the small heat shock protein (HSP20) family.

This is Small heat shock protein C4 (hspc4-1) from Rickettsia felis (strain ATCC VR-1525 / URRWXCal2) (Rickettsia azadi).